Consider the following 203-residue polypeptide: MSEDFKLDATARNDLGKGASRRLRRLADQVPAIIYGGSKAPVNVSVSHNELLKHLQHEAFFSHVIDLNIDGTSESVILKDVQRHPSKAQVLHLDFLRVDKNTKLHKQVPLHFINEATSVGVKTQGGKVVHNLTQLDVTCLPQDLPEFIEVDLAAIEAGQILHISDLKLPKGVISTDLTKGADHDLAVVTILKAKGGESEEAAE.

The protein belongs to the bacterial ribosomal protein bL25 family. CTC subfamily. As to quaternary structure, part of the 50S ribosomal subunit; part of the 5S rRNA/L5/L18/L25 subcomplex. Contacts the 5S rRNA. Binds to the 5S rRNA independently of L5 and L18.

Its function is as follows. This is one of the proteins that binds to the 5S RNA in the ribosome where it forms part of the central protuberance. In Cellvibrio japonicus (strain Ueda107) (Pseudomonas fluorescens subsp. cellulosa), this protein is Large ribosomal subunit protein bL25.